Reading from the N-terminus, the 121-residue chain is Cytochrome c2 iso-2 (121 aa).

Heme c contacts are provided by cysteine 15, cysteine 18, histidine 19, and methionine 98.

It belongs to the cytochrome c family. Binds 1 heme c group covalently per subunit.

In terms of biological role, cytochrome c2 is found mainly in purple, non-sulfur, photosynthetic bacteria where it functions as the electron donor to the oxidized bacteriochlorophyll in the photophosphorylation pathway. However, it may also have a role in the respiratory chain and is found in some non-photosynthetic bacteria. The sequence is that of Cytochrome c2 iso-2 from Rhodospirillum centenum (Rhodocista centenaria).